A 64-amino-acid polypeptide reads, in one-letter code: Large ribosomal subunit protein bL35 (64 aa).

It belongs to the bacterial ribosomal protein bL35 family.

The polypeptide is Large ribosomal subunit protein bL35 (Clavibacter michiganensis subsp. michiganensis (strain NCPPB 382)).